Here is a 279-residue protein sequence, read N- to C-terminus: Tryptophan 2,3-dioxygenase (279 aa).

Residues 48–52 (FIIQH), Tyr-110, and Arg-114 each bind substrate. Residue His-237 participates in heme binding. Residue Thr-251 coordinates substrate.

This sequence belongs to the tryptophan 2,3-dioxygenase family. Homotetramer. Heme is required as a cofactor.

It catalyses the reaction L-tryptophan + O2 = N-formyl-L-kynurenine. The protein operates within amino-acid degradation; L-tryptophan degradation via kynurenine pathway; L-kynurenine from L-tryptophan: step 1/2. Its function is as follows. Heme-dependent dioxygenase that catalyzes the oxidative cleavage of the L-tryptophan (L-Trp) pyrrole ring and converts L-tryptophan to N-formyl-L-kynurenine. Catalyzes the oxidative cleavage of the indole moiety. This is Tryptophan 2,3-dioxygenase from Bradyrhizobium sp. (strain ORS 278).